A 359-amino-acid chain; its full sequence is Uroporphyrinogen decarboxylase (359 aa).

The coproporphyrinogen III site is built by Arg-28, Ala-30, Arg-32, Asp-79, Tyr-157, Ser-212, and His-335.

Belongs to the uroporphyrinogen decarboxylase family. In terms of assembly, monomer.

Its subcellular location is the nucleus. The protein resides in the cytoplasm. It carries out the reaction uroporphyrinogen III + 4 H(+) = coproporphyrinogen III + 4 CO2. The enzyme catalyses uroporphyrinogen I + 4 H(+) = coproporphyrinogen I + 4 CO2. The protein operates within porphyrin-containing compound metabolism; protoporphyrin-IX biosynthesis; coproporphyrinogen-III from 5-aminolevulinate: step 4/4. Functionally, catalyzes the sequential decarboxylation of four acetate groups of uroporphyrinogen-III (octacarboxyporphyrin) to yield coproporphyrinogen-III (tetracarboxyporphyrin) with the formation of intermediate hepta-, hexa- and penta-carboxylate porphyrinogens in the heme biosynthesis pathway. Acts on a number of porphyrinogens, but only coproporphyrinogen III can ultimately be converted to heme. This chain is Uroporphyrinogen decarboxylase (hem12), found in Schizosaccharomyces pombe (strain 972 / ATCC 24843) (Fission yeast).